A 207-amino-acid chain; its full sequence is Dephospho-CoA kinase (207 aa).

The region spanning 11 to 207 (RIGLTGGIAS…LLKMSPTAEL (197 aa)) is the DPCK domain. Position 19-24 (19-24 (ASGKSS)) interacts with ATP.

Belongs to the CoaE family.

The protein localises to the cytoplasm. The catalysed reaction is 3'-dephospho-CoA + ATP = ADP + CoA + H(+). The protein operates within cofactor biosynthesis; coenzyme A biosynthesis; CoA from (R)-pantothenate: step 5/5. In terms of biological role, catalyzes the phosphorylation of the 3'-hydroxyl group of dephosphocoenzyme A to form coenzyme A. This chain is Dephospho-CoA kinase, found in Synechococcus sp. (strain CC9605).